A 1034-amino-acid polypeptide reads, in one-letter code: Sodium bicarbonate cotransporter 3 (1034 aa).

Disordered stretches follow at residues Met-1–Ser-31 and His-53–Val-99. Residues Met-1–Cys-476 lie on the Extracellular side of the membrane. Ser-57, Ser-60, Ser-89, and Ser-155 each carry phosphoserine. A compositionally biased stretch (basic residues) spans Ser-60 to Lys-77. Positions Asp-78–Pro-90 are enriched in basic and acidic residues. Asn-176 carries an N-linked (GlcNAc...) asparagine glycan. Phosphoserine occurs at positions 238, 250, 260, 263, 268, and 271. A compositionally biased stretch (polar residues) spans Ser-250–Ser-260. The segment at Ser-250–Thr-276 is disordered. Asn-274 is a glycosylation site (N-linked (GlcNAc...) asparagine). Ser-275 and Ser-424 each carry phosphoserine. Residues Leu-477–Leu-497 traverse the membrane as a helical segment. At Leu-498–Arg-505 the chain is on the cytoplasmic side. The chain crosses the membrane as a helical span at residues Ile-506–Ala-526. Residues Gly-527–Ser-563 lie on the Extracellular side of the membrane. The chain crosses the membrane as a helical span at residues Ile-564–Val-584. The Cytoplasmic portion of the chain corresponds to Cys-585–Glu-593. Residues Ala-594–Leu-614 traverse the membrane as a helical segment. Topologically, residues Gly-615–His-685 are extracellular. The cysteines at positions 634 and 636 are disulfide-linked. N-linked (GlcNAc...) asparagine glycans are attached at residues Asn-644, Asn-654, and Asn-664. Residues Cys-670 and Cys-682 are joined by a disulfide bond. A helical membrane pass occupies residues Gly-686–Leu-706. The Cytoplasmic segment spans residues Ser-707–Asp-729. Residues Phe-730 to Ser-750 form a helical membrane-spanning segment. Residues Pro-751–Asn-776 are Extracellular-facing. Residues Pro-777–Met-797 traverse the membrane as a helical segment. The Cytoplasmic portion of the chain corresponds to Asp-798–Lys-812. A helical membrane pass occupies residues Leu-813–Leu-833. The interval Phe-815–Leu-915 is essential for cell membrane localization and transport activity. Topologically, residues Lys-834–Cys-876 are extracellular. A helical membrane pass occupies residues Leu-877 to Leu-897. The Cytoplasmic segment spans residues Ala-898–Leu-1034. The tract at residues Leu-918–Asp-920 is CA2-binding. The disordered stretch occupies residues Lys-926 to Gln-946. Phosphothreonine is present on Thr-951. Residues Ser-960 and Ser-1033 each carry the phosphoserine modification. Positions Glu-1031–Leu-1034 match the PDZ-binding motif.

The protein belongs to the anion exchanger (TC 2.A.31) family. As to quaternary structure, forms a complex with ATP6V1B1 and NHERF1/EBP50. Interacts in a pH dependent-manner with CA2/carbonic anhydrase 2. Interacts with CFTR through NHERF1/EBP50. Interacts with USH1C. Expressed in the spiral ligament throughout the cochlea and in photoreceptors of the outer plexiform layer of the retina (at protein level).

The protein resides in the basolateral cell membrane. It is found in the apical cell membrane. Its subcellular location is the cell projection. The protein localises to the stereocilium. It localises to the cell membrane. It catalyses the reaction hydrogencarbonate(in) + Na(+)(in) = hydrogencarbonate(out) + Na(+)(out). Its activity is regulated as follows. Activity is inhibited by 4,4'-di-isothiocyanatostilbene-2,2'-disulfonic acid (DIDS - an inhibitor of several anion channels and transporters). Electroneutral sodium- and bicarbonate-dependent cotransporter with a Na(+):HCO3(-) 1:1 stoichiometry. Mediates the sodium-dependent bicarbonate transport important for pH recovery after acid load as well as for regulation of steady-state pH in the duodenum and vascular smooth muscle cells. Plays a key role in macrophage acidification, mediating bicarbonate import into the cytoplasm which is crucial for net acid extrusion and maintenance of cytoplasmic pH during phagocytosis. Provides cellular bicarbonate for de novo purine and pyrimidine synthesis and is a key mediator of de novo nucleotide synthesis downstream of mTORC1 signaling in proliferating cells. May be involved in maintaining locomotor activity, exploratory behavior, and hearing. The sequence is that of Sodium bicarbonate cotransporter 3 (Slc4a7) from Mus musculus (Mouse).